The following is a 216-amino-acid chain: Sperm microtubule inner protein 8 (216 aa).

In terms of assembly, microtubule inner protein component of sperm flagellar doublet microtubules. Expressed in sperm.

The protein resides in the cytoplasm. The protein localises to the cytoskeleton. It localises to the flagellum axoneme. Microtubule inner protein (MIP) part of the dynein-decorated doublet microtubules (DMTs) in flagellum axoneme. May serve to reinforce and thus stabilize the microtubule structure in the sperm flagella. This Bos taurus (Bovine) protein is Sperm microtubule inner protein 8 (SPMIP8).